The primary structure comprises 820 residues: Catenin beta (820 aa).

A compositionally biased stretch (polar residues) spans 1-16; sequence MEQARYSNQQSVNPQQ. The disordered stretch occupies residues 1 to 74; the sequence is MEQARYSNQQ…SRHEDGGEEA (74 aa). Low complexity predominate over residues 52-63; that stretch reads SSATSHPPSVSS. ARM repeat units lie at residues 157–196, 199–239, 241–280, 283–322, 367–405, 406–445, 448–489, 495–535, 603–642, and 644–683; these read NYQDDADLATRAIPELTKLLNDDDLVVVNQAAMMVHQLSK, ASRH…NLSH, RAGLLQIFKSGGIPALIKLLSSPVESVLFYAITTLHNLLL, EGSKMAVRLAGGLQKMVALLSRNNPKFLAITTDCLQILAY, HNNKPAIVEAGGMSALGLHLGHHSNRLVQNCLWTLRNLS, DCHRGTDDIEPLLQMLVQLLASNDINVVTCACGILSNLTC, SRNK…HVTS, EMGQ…NLAL, SHNRALIQGLNCIPLFVQLLYNNIENIQRVAAGVLSELSL, and KQGAEMIEQEGATAPLTELLHSRNEGVATYAAAVLYRMSD. The segment at 708–811 is disordered; sequence PWGDPLDMPS…LDSIPPADNT (104 aa). Over residues 785–796 the composition is skewed to low complexity; sequence GMDPGLPDMGPP.

The protein belongs to the beta-catenin family.

Its subcellular location is the cytoplasm. It is found in the cytoskeleton. Its function is as follows. Binds to the cytoplasmic domain of the cell-cell adhesion molecule E-cadherin, and perhaps to other (membrane) proteins. The association of catenins to cadherins produces a complex which is linked to the actin filament network, and which seems to be of primary importance for cadherins cell-adhesion properties. This is Catenin beta from Tripneustes gratilla (Hawaian sea urchin).